Reading from the N-terminus, the 835-residue chain is Lon protease (835 aa).

Residues 4-224 (LPYIAIRNQL…LAINMLINAI (221 aa)) enclose the Lon N-terminal domain. 412–419 (GPPGTGKT) contacts ATP. In terms of domain architecture, Lon proteolytic spans 649 to 832 (QPKAGVVNAL…DEIFKYIFEA (184 aa)). Residues Ser-738 and Lys-781 contribute to the active site.

The protein belongs to the peptidase S16 family. In terms of assembly, homohexamer. Organized in a ring with a central cavity.

Its subcellular location is the cytoplasm. The enzyme catalyses Hydrolysis of proteins in presence of ATP.. Functionally, ATP-dependent serine protease that mediates the selective degradation of mutant and abnormal proteins as well as certain short-lived regulatory proteins. Required for cellular homeostasis and for survival from DNA damage and developmental changes induced by stress. Degrades polypeptides processively to yield small peptide fragments that are 5 to 10 amino acids long. Binds to DNA in a double-stranded, site-specific manner. This Metamycoplasma arthritidis (strain 158L3-1) (Mycoplasma arthritidis) protein is Lon protease.